Here is a 514-residue protein sequence, read N- to C-terminus: MNLQEEIKKRRTFAIISHPDAGKTTITEQLLYFGGEIREAGTVKGKKTGNFAKSDWMDIEKQRGISVTSSVMQFDYAGKRVNILDTPGHEDFSEDTYRTLMAVDAAVMVVDSAKGIEAQTKKLFEVVKHRGIPIFTFINKLDRDGREPLDLLEELEEVLGIASYPMNWPIGMGRSFEGLYDLYNQRLELYKGDERFASIEDGDKLFANNPFYEQAKEDIELLTEAGNEFSEEAILKGELTPVFFGSALTNFGVQTFLDSFLAFAPEPHGHKTTDDKVIDPLDKDFSGFVFKIQANMDPRHRDRIAFVRIVSGEFERGMSVNLARTGKSVKLSNVTQFMAESRENVENAVAGDIIGVYDTGTYQVGDTLTVGKNKFEFEPLPTFTPELFMKVSAKNVMKQKSFHKGIEQLVQEGAIQLYTNYQTGEYMLGAVGQLQFEVFKHRMENEYNAEVIMTPMGKKTVRWIKEEDLDERMSSSRNILAKDRFNKPVFLFENDFSLHWFADKYPDIVLEEKM.

Positions Lys8–His268 constitute a tr-type G domain. GTP is bound by residues Ser17–Thr24, Asp85–His89, and Asn139–Asp142.

Belongs to the TRAFAC class translation factor GTPase superfamily. Classic translation factor GTPase family. PrfC subfamily.

It is found in the cytoplasm. Functionally, increases the formation of ribosomal termination complexes and stimulates activities of RF-1 and RF-2. It binds guanine nucleotides and has strong preference for UGA stop codons. It may interact directly with the ribosome. The stimulation of RF-1 and RF-2 is significantly reduced by GTP and GDP, but not by GMP. This is Peptide chain release factor 3 from Streptococcus mutans serotype c (strain ATCC 700610 / UA159).